The chain runs to 494 residues: GlcNAc-binding protein A (494 aa).

A signal peptide spans 1-21 (MKLNKIMLAMVVMSISGTAMA). The 171-residue stretch at 22-192 (HGYIENPPSR…TFYNMIDAEF (171 aa)) folds into the Chitin-binding type-4 domain. A Chitin-binding type-3 domain is found at 435-484 (APAWSNKSSYQAKDTVTHNGRIYMSKWWADKASVPGDAAVTDTTGNGSGW). The tract at residues 474-494 (VTDTTGNGSGWGKVWEDKGAC) is disordered.

This sequence belongs to the GbpA family.

It is found in the secreted. Its function is as follows. Probably interacts with GlcNAc residues. May promote attachment to both epithelial cell surfaces and chitin. This Yersinia enterocolitica serotype O:8 / biotype 1B (strain NCTC 13174 / 8081) protein is GlcNAc-binding protein A.